Here is a 188-residue protein sequence, read N- to C-terminus: ATP synthase subunit delta (188 aa).

This sequence belongs to the ATPase delta chain family. As to quaternary structure, F-type ATPases have 2 components, F(1) - the catalytic core - and F(0) - the membrane proton channel. F(1) has five subunits: alpha(3), beta(3), gamma(1), delta(1), epsilon(1). F(0) has three main subunits: a(1), b(2) and c(10-14). The alpha and beta chains form an alternating ring which encloses part of the gamma chain. F(1) is attached to F(0) by a central stalk formed by the gamma and epsilon chains, while a peripheral stalk is formed by the delta and b chains.

The protein resides in the cell inner membrane. In terms of biological role, f(1)F(0) ATP synthase produces ATP from ADP in the presence of a proton or sodium gradient. F-type ATPases consist of two structural domains, F(1) containing the extramembraneous catalytic core and F(0) containing the membrane proton channel, linked together by a central stalk and a peripheral stalk. During catalysis, ATP synthesis in the catalytic domain of F(1) is coupled via a rotary mechanism of the central stalk subunits to proton translocation. Its function is as follows. This protein is part of the stalk that links CF(0) to CF(1). It either transmits conformational changes from CF(0) to CF(1) or is implicated in proton conduction. The polypeptide is ATP synthase subunit delta (Rhizobium johnstonii (strain DSM 114642 / LMG 32736 / 3841) (Rhizobium leguminosarum bv. viciae)).